Consider the following 436-residue polypeptide: GTPase Der (436 aa).

EngA-type G domains follow at residues 4–167 and 175–351; these read PTIA…PNTS and IKFS…MNQN. Residues 10–17, 57–61, 119–122, 181–188, 229–233, and 294–297 each bind GTP; these read GRPNVGKS, DTGGI, NKVD, DTAGM, and NKWD. The region spanning 352–436 is the KH-like domain; that stretch reads LRIPSALLND…PIKIIPRRRK (85 aa).

This sequence belongs to the TRAFAC class TrmE-Era-EngA-EngB-Septin-like GTPase superfamily. EngA (Der) GTPase family. As to quaternary structure, associates with the 50S ribosomal subunit.

In terms of biological role, GTPase that plays an essential role in the late steps of ribosome biogenesis. This Enterococcus faecalis (strain ATCC 700802 / V583) protein is GTPase Der.